Here is a 294-residue protein sequence, read N- to C-terminus: Tyrosine-protein phosphatase (294 aa).

A signal peptide spans 1 to 24 (MKTHHANLALALMLGLSSSATAVA). The Phosphocysteine intermediate role is filled by Cys182. Composition is skewed to basic and acidic residues over residues 221-231 (QPKDSDERADH) and 238-247 (PGDRPQDGGH). The segment at 221 to 252 (QPKDSDERADHGAGQAEPGDRPQDGGHGRYRA) is disordered.

Belongs to the protein-tyrosine phosphatase family. As to quaternary structure, monomer.

The catalysed reaction is O-phospho-L-tyrosyl-[protein] + H2O = L-tyrosyl-[protein] + phosphate. The polypeptide is Tyrosine-protein phosphatase (iphP) (Nostoc commune).